Reading from the N-terminus, the 255-residue chain is Pimeloyl-[acyl-carrier protein] methyl ester esterase (255 aa).

One can recognise an AB hydrolase-1 domain in the interval 16–242; it reads LVLLHGWGMN…SSHAPFITEP (227 aa). Substrate-binding positions include tryptophan 22, 82–83, and 143–147; these read SL and FMALQ. The Nucleophile role is filled by serine 82. Active-site residues include aspartate 207 and histidine 235. Residue histidine 235 participates in substrate binding.

It belongs to the AB hydrolase superfamily. Carboxylesterase BioH family. As to quaternary structure, monomer.

Its subcellular location is the cytoplasm. The catalysed reaction is 6-carboxyhexanoyl-[ACP] methyl ester + H2O = 6-carboxyhexanoyl-[ACP] + methanol + H(+). The protein operates within cofactor biosynthesis; biotin biosynthesis. The physiological role of BioH is to remove the methyl group introduced by BioC when the pimeloyl moiety is complete. It allows to synthesize pimeloyl-ACP via the fatty acid synthetic pathway through the hydrolysis of the ester bonds of pimeloyl-ACP esters. The protein is Pimeloyl-[acyl-carrier protein] methyl ester esterase of Vibrio vulnificus (strain CMCP6).